A 354-amino-acid polypeptide reads, in one-letter code: Arginase-2, mitochondrial (354 aa).

The N-terminal 22 residues, 1–22, are a transit peptide targeting the mitochondrion; the sequence is MFLRSSASRLLHGQIPCVLTRS. 4 residues coordinate Mn(2+): histidine 120, aspartate 143, histidine 145, and aspartate 147. Residues 145-149, 156-158, and glutamate 202 each bind substrate; these read HADIN and SGN. Mn(2+) contacts are provided by aspartate 251 and aspartate 253. Substrate contacts are provided by threonine 265 and glutamate 296.

This sequence belongs to the arginase family. In terms of assembly, homotrimer. The cofactor is Mn(2+).

It localises to the mitochondrion. The enzyme catalyses L-arginine + H2O = urea + L-ornithine. Its pathway is nitrogen metabolism; urea cycle; L-ornithine and urea from L-arginine: step 1/1. May play a role in the regulation of extra-urea cycle arginine metabolism and also in down-regulation of nitric oxide synthesis. Extrahepatic arginase functions to regulate L-arginine bioavailability to nitric oxid synthase (NOS). Arginine metabolism is a critical regulator of innate and adaptive immune responses. Seems to be involved in negative regulation of the survival capacity of activated CD4(+) and CD8(+) T cells. May suppress inflammation-related signaling in asthmatic airway epithelium. May contribute to the immune evasion of H.pylori by restricting M1 macrophage activation and polyamine metabolism. May play a role in promoting prenatal immune suppression. Regulates RPS6KB1 signaling, which promotes endothelial cell senescence and inflammation and implicates NOS3/eNOS dysfunction. Can inhibit endothelial autophagy independently of its enzymatic activity implicating mTORC2 signaling. Involved in vascular smooth muscle cell senescence and apoptosis independently of its enzymatic activity. The sequence is that of Arginase-2, mitochondrial (Arg2) from Mus musculus (Mouse).